A 220-amino-acid polypeptide reads, in one-letter code: Fructose-6-phosphate aldolase (220 aa).

The Schiff-base intermediate with substrate role is filled by Lys85.

It belongs to the transaldolase family. Type 3A subfamily. As to quaternary structure, homodecamer.

The protein localises to the cytoplasm. The catalysed reaction is beta-D-fructose 6-phosphate = dihydroxyacetone + D-glyceraldehyde 3-phosphate. In terms of biological role, catalyzes the reversible formation of fructose 6-phosphate from dihydroxyacetone and D-glyceraldehyde 3-phosphate via an aldolization reaction. This is Fructose-6-phosphate aldolase from Salmonella typhi.